Reading from the N-terminus, the 574-residue chain is Choline transporter-like protein ctl1 (574 aa).

N-linked (GlcNAc...) asparagine glycosylation is found at Asn-40 and Asn-101. A run of 8 helical transmembrane segments spans residues 144–164 (WGLT…LMVW), 189–209 (KDAI…VAIP), 211–231 (FLYF…VYLL), 246–266 (LMLL…YYVW), 291–311 (QITL…FIWV), 336–356 (WVLA…FHAL), 396–416 (YGLC…LHFL), and 434–456 (TSAS…VPYM). The N-linked (GlcNAc...) asparagine glycan is linked to Asn-457. 2 consecutive transmembrane segments (helical) span residues 485-505 (LLAA…NYSI) and 511-531 (FYGY…IGAI). N-linked (GlcNAc...) asparagine glycosylation occurs at Asn-558.

This sequence belongs to the CTL (choline transporter-like) family. Interacts with atg9.

The protein resides in the endoplasmic reticulum membrane. It is found in the preautophagosomal structure membrane. Its function is as follows. Required for the normal organization of the preautophagosomal structure (PAS) and for the correct subcellular location of atg9. The chain is Choline transporter-like protein ctl1 (ctl1) from Schizosaccharomyces pombe (strain 972 / ATCC 24843) (Fission yeast).